The following is a 511-amino-acid chain: MPNKLIIFDTTLRDGEQSPGASMTRDEKVRIAKVLEKMQVDVIEAGFAIASVGDFEAVQTVANVVQDSIICSLSRALDKDIDCAGEALKGANASRIHTFIATSDIHMKMKLQMTPDQVVEQAVRAVKRAKRYTNDVEFSPEDAGRSDEDFLCRIIEATINAGATTINIPDTVGYNIPHQFGVTIKSLIGRVPNSDKAIFSAHCHNDLGLAVANSLSAVLNGARQVECTINGLGERAGNTSLEELVMAVRTRQDIFDCDTDINATHILSASRLVSSVTGFIVQPNKAIVGANAFAHEAGIHQDGVIKYRETYEIMRAEDVGWNANQLVLGKHSGRNAFKVRLAELGVEFNNEEGLNDAFRRFKELADKKHEIFDEDLQALVSETQTEAYEAIKLVSLKVCTETGEKNTATVVLSIDDKEQTATANTSGAVDATFIAISSLTGIKINLQLYSVSNVTQGTDALGEVNVRLECNGRIVNGQGVDTDIITASAKAYVHGLNKVLAATNKAQHPQI.

In terms of domain architecture, Pyruvate carboxyltransferase spans 5-267 (LIIFDTTLRD…DTDINATHIL (263 aa)). Mn(2+)-binding residues include aspartate 14, histidine 202, histidine 204, and asparagine 238. Residues 392–511 (KLVSLKVCTE…ATNKAQHPQI (120 aa)) are regulatory domain.

Belongs to the alpha-IPM synthase/homocitrate synthase family. LeuA type 1 subfamily. In terms of assembly, homodimer. Mn(2+) is required as a cofactor.

Its subcellular location is the cytoplasm. The catalysed reaction is 3-methyl-2-oxobutanoate + acetyl-CoA + H2O = (2S)-2-isopropylmalate + CoA + H(+). It participates in amino-acid biosynthesis; L-leucine biosynthesis; L-leucine from 3-methyl-2-oxobutanoate: step 1/4. Functionally, catalyzes the condensation of the acetyl group of acetyl-CoA with 3-methyl-2-oxobutanoate (2-ketoisovalerate) to form 3-carboxy-3-hydroxy-4-methylpentanoate (2-isopropylmalate). The chain is 2-isopropylmalate synthase from Ruthia magnifica subsp. Calyptogena magnifica.